The chain runs to 287 residues: MDAGVGLRAKPGAWAGLGNPRRSSTARVPVRFAVEKFAQPLVLGSDRRSCGAKLKVSCSRKPAGIDKTYYSADEALVLKQKAEDVVPYLNDRCIYLVGMMGSGKTTVGKILAEVLGYSFFDSDKLVEKAVGISSVAEIFQLHSEAFFRDNESEVLRDLSSMHRLVVATGGGAVIRPINWSYMKKGSTIWLDVPLDALARRIAAVGTASRPLLHQESGDPYAKAYAKLTALFEQRMDSYANADARVSLEHIAVKQGHSNVTTLTPSAIAIEALLKMESFLTEKAMIRN.

Residues 1–57 (MDAGVGLRAKPGAWAGLGNPRRSSTARVPVRFAVEKFAQPLVLGSDRRSCGAKLKVS) constitute a chloroplast transit peptide. An ATP-binding site is contributed by 98–105 (GMMGSGKT). Residue T105 coordinates Mg(2+). Positions 123, 148, and 170 each coordinate substrate. R209 contacts ATP.

The protein belongs to the shikimate kinase family. Mg(2+) is required as a cofactor. As to expression, expressed in panicles.

The protein localises to the plastid. It localises to the chloroplast. The catalysed reaction is shikimate + ATP = 3-phosphoshikimate + ADP + H(+). It participates in metabolic intermediate biosynthesis; chorismate biosynthesis; chorismate from D-erythrose 4-phosphate and phosphoenolpyruvate: step 5/7. Its function is as follows. Catalyzes the specific phosphorylation of the 3-hydroxyl group of shikimic acid using ATP as a cosubstrate. This Oryza sativa subsp. japonica (Rice) protein is Shikimate kinase 3, chloroplastic (SK3).